A 39-amino-acid chain; its full sequence is Natriuretic peptide NsNP-b (39 aa).

The propeptide occupies 1–8 (SGSKTAKI). Cysteine 12 and cysteine 28 form a disulfide bridge. A disordered region spans residues 19-39 (RIGSTSGMGCGSVPKPTPGGS).

It belongs to the natriuretic peptide family. Expressed by the venom gland.

The protein resides in the secreted. Its function is as follows. Snake venom natriuretic peptide that targets both NPR1 and NPR2. Exhibits hypotensive and vasodepressor activities. The protein is Natriuretic peptide NsNP-b of Notechis scutatus scutatus (Mainland tiger snake).